A 518-amino-acid polypeptide reads, in one-letter code: Arginyl-tRNA--protein transferase 1 (518 aa).

Residues 149–165 (ESLQSEGKNSKKEEPHE) are compositionally biased toward basic and acidic residues. Residues 149-207 (ESLQSEGKNSKKEEPHELLQSQDSVGEKLGSGEPSHSVKVHTVPKPGKGADLSKPPCRK) form a disordered region. Position 169 is a phosphoserine (serine 169).

The protein belongs to the R-transferase family. In terms of assembly, monomer. Interacts with LIAT1; LIAT1 is not a substrate of ATE1, the interaction takes place in the cytoplasm and seems to increase ATE1 arginyltransferase activity.

It localises to the nucleus. It is found in the cytoplasm. It catalyses the reaction an N-terminal L-alpha-aminoacyl-[protein] + L-arginyl-tRNA(Arg) = an N-terminal L-arginyl-L-aminoacyl-[protein] + tRNA(Arg) + H(+). Functionally, involved in the post-translational conjugation of arginine to the N-terminal aspartate or glutamate of a protein. This arginylation is required for degradation of the protein via the ubiquitin pathway. Does not arginylate cysteine residues. The polypeptide is Arginyl-tRNA--protein transferase 1 (ATE1) (Macaca fascicularis (Crab-eating macaque)).